A 271-amino-acid polypeptide reads, in one-letter code: Glutamate racemase (271 aa).

Substrate contacts are provided by residues D10–S11 and Y42–G43. C74 serves as the catalytic Proton donor/acceptor. N75–T76 is a substrate binding site. The Proton donor/acceptor role is filled by C189. T190 to H191 is a binding site for substrate.

The protein belongs to the aspartate/glutamate racemases family.

It carries out the reaction L-glutamate = D-glutamate. It participates in cell wall biogenesis; peptidoglycan biosynthesis. Its function is as follows. Provides the (R)-glutamate required for cell wall biosynthesis. The sequence is that of Glutamate racemase from Bartonella bacilliformis (strain ATCC 35685 / KC583 / Herrer 020/F12,63).